A 1706-amino-acid polypeptide reads, in one-letter code: Bifunctional hemolysin/adenylate cyclase (1706 aa).

The interval 1–399 (MQQSHQAGYA…RRPSLGAVER (399 aa)) is a, catalytic. 349–356 (AYGVAGKS) lines the ATP pocket. Positions 383-405 (VPASPGLRRPSLGAVERQDSGYD) are disordered. Residues 400-912 (QDSGYDSLDG…LKHSIKLDVI (513 aa)) are b, Ala/Gly-rich. Residues 500–698 (LSAAVFGLGE…SVVGAPVAVV (199 aa)) form a required for interaction with CyaC region. N6-palmitoyl lysine attachment occurs at residues Lys860 and Lys983. The segment at 913 to 1656 (GGDGDDVVLA…RDADHRVEII (744 aa)) is c. Hemolysin-type calcium-binding repeat units lie at residues 1014–1031 (IGGA…DNFL), 1032–1049 (AGGS…NDTL), 1050–1067 (VGGE…DDVF), 1155–1172 (WGHD…DDIL), 1173–1190 (RGGL…NDIF), 1279–1296 (MGQG…DDLL), 1297–1314 (FGGD…NDTL), 1315–1332 (YGGL…NDWF), 1335–1352 (TQAR…VDTV), 1411–1428 (TGDA…ADVL), 1429–1446 (AGGE…DDQL), 1447–1464 (SGDA…DDWF), 1468–1484 (AANA…RDTV), 1537–1554 (IGDA…NDVL), 1555–1572 (SGGA…SDLL), 1573–1590 (SGDA…DDTY), and 1603–1620 (ESGG…ADQL). Residues 1657 to 1706 (HAANQAVDQAGIEKLVEAMAQYPDPGAAAAAPPAARVPDTLMQSLAVNWR) form a d, Asp/Gly-rich region.

The protein in the N-terminal section; belongs to the adenylyl cyclase class-2 family. This sequence in the C-terminal section; belongs to the RTX prokaryotic toxin family. Released in a processed form. In terms of processing, palmitoylated at Lys-860 and Lys-983 by CyaC. The toxin only becomes active when modified in position Lys-983: palmitoylation is required for efficient membrane insertion and pore formation of the acylated Hemolysin chain.

Its subcellular location is the secreted. It localises to the host cell membrane. The catalysed reaction is ATP = 3',5'-cyclic AMP + diphosphate. Activated by host calmodulin. Its function is as follows. Bifunctional adenylate cyclase toxin-hemolysin that plays a crucial role in host colonization. It causes whooping cough by acting on mammalian cells by elevating cAMP-concentration and thus disrupts normal cell function. Adenylate cyclase that is activated by host intracellular calmodulin and catalyzes un-regulated conversion of ATP to cAMP, thereby impairing microbicidal functions of immune effector cells and inducing apoptosis of lung macrophages. In terms of biological role, hemolysin that forms small cation-selective membrane channels, leading to hemolytic activity. The hemolytic activity of CyaA is weak compared with that of the HlyA of E.coli. The polypeptide is Bifunctional hemolysin/adenylate cyclase (cya) (Bordetella pertussis (strain Tohama I / ATCC BAA-589 / NCTC 13251)).